The chain runs to 612 residues: FAD-linked oxidoreductase notD' (612 aa).

Positions 1–19 are cleaved as a signal peptide; the sequence is MRDIRELLLVLFTSCLALG. 3 N-linked (GlcNAc...) asparagine glycosylation sites follow: asparagine 50, asparagine 86, and asparagine 109. In terms of domain architecture, FAD-binding PCMH-type spans 124–307; sequence GQGRIPRYSA…TSITMPVFGA (184 aa). 2 N-linked (GlcNAc...) asparagine glycosylation sites follow: asparagine 311 and asparagine 396.

This sequence belongs to the oxygen-dependent FAD-linked oxidoreductase family. The cofactor is FAD.

It functions in the pathway alkaloid biosynthesis. Its function is as follows. FAD-linked oxidoreductase; part of the gene cluster that mediates the biosynthesis of notoamide, a fungal indole alkaloid that belongs to a family of natural products containing a characteristic bicyclo[2.2.2]diazaoctane core. The first step of notoamide biosynthesis involves coupling of L-proline and L-tryptophan by the bimodular NRPS notE', to produce cyclo-L-tryptophan-L-proline called brevianamide F. The reverse prenyltransferase notF' then acts as a deoxybrevianamide E synthase and converts brevianamide F to deoxybrevianamide E via reverse prenylation at C-2 of the indole ring leading to the bicyclo[2.2.2]diazaoctane core. Deoxybrevianamide E is further hydroxylated at C-6 of the indole ring, likely catalyzed by the cytochrome P450 monooxygenase notG', to yield 6-hydroxy-deoxybrevianamide E. 6-hydroxy-deoxybrevianamide E is a specific substrate of the prenyltransferase notC' for normal prenylation at C-7 to produce 6-hydroxy-7-prenyl-deoxybrevianamide, also called notoamide S. As the proposed pivotal branching point in notoamide biosynthesis, notoamide S can be diverted to notoamide E through an oxidative pyran ring closure putatively catalyzed by either notH' cytochrome P450 monooxygenase or the notD' FAD-linked oxidoreductase. This step would be followed by an indole 2,3-epoxidation-initiated pinacol-like rearrangement catalyzed by the notB' FAD-dependent monooxygenase leading to the formation of notoamide C and notoamide D. On the other hand notoamide S is converted to notoamide T by notH' (or notD'), a bifunctional oxidase that also functions as the intramolecular Diels-Alderase responsible for generation of (-)-notoamide T. To generate antipodal (+)-notoaminide T, notH (or notD) in Aspergillus strain MF297-2 is expected to catalyze a Diels-Alder reaction leading to the opposite stereochemistry. The remaining oxidoreductase notD' (or notH') likely catalyzes the oxidative pyran ring formation to yield (-)-stephacidin A. The FAD-dependent monooxygenase notI' is highly similar to notB' and is predicted to catalyze a similar conversion from (-)-stephacidin A to (+)-notoamide B via the 2,3-epoxidation of (-)-stephacidin A followed by a pinacol-type rearrangement. Finally, it remains unclear which enzyme could be responsible for the final hydroxylation steps leading to notoamide A and sclerotiamide. The polypeptide is FAD-linked oxidoreductase notD' (Aspergillus versicolor).